The sequence spans 717 residues: DNA ligase (717 aa).

NAD(+)-binding positions include 44-48 (DADYD), 93-94 (SL), and glutamate 127. Lysine 129 (N6-AMP-lysine intermediate) is an active-site residue. Residues arginine 150, glutamate 186, lysine 302, and lysine 326 each coordinate NAD(+). The Zn(2+) site is built by cysteine 431, cysteine 434, cysteine 455, and cysteine 461. Residues 639 to 717 (ATDSPVAGKT…EDEWLALIGG (79 aa)) enclose the BRCT domain.

This sequence belongs to the NAD-dependent DNA ligase family. LigA subfamily. Mg(2+) serves as cofactor. Requires Mn(2+) as cofactor.

It carries out the reaction NAD(+) + (deoxyribonucleotide)n-3'-hydroxyl + 5'-phospho-(deoxyribonucleotide)m = (deoxyribonucleotide)n+m + AMP + beta-nicotinamide D-nucleotide.. DNA ligase that catalyzes the formation of phosphodiester linkages between 5'-phosphoryl and 3'-hydroxyl groups in double-stranded DNA using NAD as a coenzyme and as the energy source for the reaction. It is essential for DNA replication and repair of damaged DNA. This chain is DNA ligase, found in Sinorhizobium medicae (strain WSM419) (Ensifer medicae).